The primary structure comprises 332 residues: Sesquiterpene synthase MBR_10393 (332 aa).

Positions 91 and 96 each coordinate Mg(2+). The short motif at 91-96 (DDLFVD) is the DDXXXD motif element. R184 provides a ligand contact to substrate. Positions 230, 234, and 238 each coordinate Mg(2+).

It belongs to the terpene synthase family. Mg(2+) is required as a cofactor.

It carries out the reaction (2E,6E)-farnesyl diphosphate + H2O = (+)-corvol ether B + diphosphate. It catalyses the reaction (2E,6E)-farnesyl diphosphate + H2O = (+)-corvol ether A + diphosphate. Its function is as follows. Terpene synthase that catalyzes the conversion of (2E,6E)-farnesyl diphosphate (FPP) into sesquiterpenes which are important for fungi-environment interactions. Produces a mixture consisting of 8 sesquiterpenes including corvol ethers A and B, as well as traces of epizonarene, gamma-cadinene, delta-cadinene, alpha-cadinene, alpha-cadinol, and an unidentified sesquiterpene. The major product is corvol ether B. The protein is Sesquiterpene synthase MBR_10393 of Metarhizium brunneum (strain ARSEF 3297).